The primary structure comprises 496 residues: Beta-amylase (496 aa).

Substrate contacts are provided by Asp54, His94, and Asp102. Glu187 serves as the catalytic Proton donor. Residues Lys296, His301, and Thr343 each coordinate substrate. The Proton acceptor role is filled by Glu381. Substrate contacts are provided by residues 382–383 (NA) and Arg421. Residues 455-496 (YNHGIPPLKRSGPKIPDDVLNEATKPIPPFPWDSETDMKVDG) form a disordered region.

The protein belongs to the glycosyl hydrolase 14 family.

The catalysed reaction is Hydrolysis of (1-&gt;4)-alpha-D-glucosidic linkages in polysaccharides so as to remove successive maltose units from the non-reducing ends of the chains.. The protein is Beta-amylase (BMY1) of Medicago sativa (Alfalfa).